Consider the following 517-residue polypeptide: MTAATEQKEKTGTDNVGRVVRVTGPVVDVEFPRGSVPELFNALHAEISYKDLAKTLTLEVAQHLGDSLVRCISMQPTDGLVRGVDVTDTGASISVPVGEGVKGHVFNALGACLDDPGYGKDFEKWSIHRKPPAFDELEPRTEMLETGLKVVDLLTPYVRGGKIALFGGAGVGKTVLIQEMINRIARNFGGTSVFAGVGERTREGNDLWVELADANVLKDTALVFGQMDEPPGTRMRVALSALTMAEYFRDEKQQDVLLFIDNIFRFTQAGSEVSTLLGRMPSAVGYQPTLADEMGELQERITSTRGRSITSMQAVYVPADDYTDPAPATTFAHLDATTELSRSVFSKGIFPAVDPLASSSTILDPSVVGDEHYRVAQEVIRILQRYKDLQDIIAILGIDELAEEDKQLVQRARRIERFLSQNMMAAEQFTGQPGSTVPLKETIEAFDKLSKGDFDHLPEQAFFLIGGLEDLQRKAESMGAKMDDGGSDGAPPPSDSKDKGKGDSKADDKGDDADKDA.

167–174 (GGAGVGKT) lines the ATP pocket. 2 stretches are compositionally biased toward basic and acidic residues: residues 475–484 (AESMGAKMDD) and 495–508 (DSKDKGKGDSKADD). Residues 475–517 (AESMGAKMDDGGSDGAPPPSDSKDKGKGDSKADDKGDDADKDA) are disordered.

The protein belongs to the ATPase alpha/beta chains family. F-type ATPases have 2 components, CF(1) - the catalytic core - and CF(0) - the membrane proton channel. CF(1) has five subunits: alpha(3), beta(3), gamma(1), delta(1), epsilon(1). CF(0) has three main subunits: a(1), b(2) and c(9-12). The alpha and beta chains form an alternating ring which encloses part of the gamma chain. CF(1) is attached to CF(0) by a central stalk formed by the gamma and epsilon chains, while a peripheral stalk is formed by the delta and b chains.

The protein localises to the cell membrane. The enzyme catalyses ATP + H2O + 4 H(+)(in) = ADP + phosphate + 5 H(+)(out). Its function is as follows. Produces ATP from ADP in the presence of a proton gradient across the membrane. The catalytic sites are hosted primarily by the beta subunits. This is ATP synthase subunit beta from Mycobacterium sp. (strain JLS).